The chain runs to 611 residues: Dihydroxy-acid dehydratase (611 aa).

Asp-81 is a binding site for Mg(2+). Cys-122 contacts [2Fe-2S] cluster. Residues Asp-123 and Lys-124 each contribute to the Mg(2+) site. Lys-124 bears the N6-carboxylysine mark. Cys-195 is a [2Fe-2S] cluster binding site. Residue Glu-491 coordinates Mg(2+). The active-site Proton acceptor is Ser-517.

This sequence belongs to the IlvD/Edd family. Homodimer. Requires [2Fe-2S] cluster as cofactor. It depends on Mg(2+) as a cofactor.

The enzyme catalyses (2R)-2,3-dihydroxy-3-methylbutanoate = 3-methyl-2-oxobutanoate + H2O. It catalyses the reaction (2R,3R)-2,3-dihydroxy-3-methylpentanoate = (S)-3-methyl-2-oxopentanoate + H2O. It functions in the pathway amino-acid biosynthesis; L-isoleucine biosynthesis; L-isoleucine from 2-oxobutanoate: step 3/4. It participates in amino-acid biosynthesis; L-valine biosynthesis; L-valine from pyruvate: step 3/4. Its function is as follows. Functions in the biosynthesis of branched-chain amino acids. Catalyzes the dehydration of (2R,3R)-2,3-dihydroxy-3-methylpentanoate (2,3-dihydroxy-3-methylvalerate) into 2-oxo-3-methylpentanoate (2-oxo-3-methylvalerate) and of (2R)-2,3-dihydroxy-3-methylbutanoate (2,3-dihydroxyisovalerate) into 2-oxo-3-methylbutanoate (2-oxoisovalerate), the penultimate precursor to L-isoleucine and L-valine, respectively. The polypeptide is Dihydroxy-acid dehydratase (Brucella abortus (strain S19)).